The sequence spans 139 residues: General odorant-binding protein 56a (139 aa).

An N-terminal signal peptide occupies residues 1 to 19; the sequence is MNSYFVIALSALFVTLAVG. A glycan (N-linked (GlcNAc...) asparagine) is linked at Asn-23. Cystine bridges form between Cys-39–Cys-71, Cys-67–Cys-118, and Cys-109–Cys-127.

Belongs to the PBP/GOBP family. Expressed in ventral pits of larvae. In adults, it is not specifically expressed in chemosensory organs. Also expressed in stalk cells at the proximal tip of the wing disk.

The protein resides in the secreted. Its function is as follows. Present in the aqueous fluid surrounding olfactory sensory dendrites and are thought to aid in the capture and transport of hydrophobic odorants into and through this fluid. The polypeptide is General odorant-binding protein 56a (Obp56a) (Drosophila melanogaster (Fruit fly)).